The following is a 382-amino-acid chain: Ribosomal RNA large subunit methyltransferase G (382 aa).

It belongs to the methyltransferase superfamily. RlmG family.

The protein localises to the cytoplasm. The enzyme catalyses guanosine(1835) in 23S rRNA + S-adenosyl-L-methionine = N(2)-methylguanosine(1835) in 23S rRNA + S-adenosyl-L-homocysteine + H(+). Functionally, specifically methylates the guanine in position 1835 (m2G1835) of 23S rRNA. In Aliivibrio fischeri (strain MJ11) (Vibrio fischeri), this protein is Ribosomal RNA large subunit methyltransferase G.